Reading from the N-terminus, the 255-residue chain is 3-oxoacyl-[acyl-carrier-protein] reductase MabA (255 aa).

Residues 33–35, arginine 55, 69–70, glycine 98, tyrosine 161, lysine 165, isoleucine 194, and arginine 205 contribute to the NADP(+) site; these read RGI and DV. Catalysis depends on tyrosine 161, which acts as the Proton acceptor.

It belongs to the short-chain dehydrogenases/reductases (SDR) family. Homotetramer.

It localises to the secreted. The protein localises to the cell wall. The catalysed reaction is a (3R)-hydroxyacyl-[ACP] + NADP(+) = a 3-oxoacyl-[ACP] + NADPH + H(+). The protein operates within lipid metabolism; mycolic acid biosynthesis. Functionally, part of the mycobacterial fatty acid elongation system FAS-II, which is involved in mycolic acid biosynthesis. Catalyzes the NADPH-dependent reduction of beta-ketoacyl derivatives, the second step of the FAS-II elongation cycle. This Mycobacterium avium protein is 3-oxoacyl-[acyl-carrier-protein] reductase MabA.